The primary structure comprises 94 residues: RxLR effector protein PITG_15972 (94 aa).

The first 21 residues, 1–21 (MRAVYILAMACAATLQASSSA), serve as a signal peptide directing secretion. The short motif at 50 to 65 (RLLRVEDKEEETEEER) is the RxLR-dEER element.

Belongs to the RxLR effector family.

It is found in the secreted. Its subcellular location is the host cytoplasm. The protein localises to the host nucleus. In terms of biological role, effector that enhances P.infestans colonization of Nicotiana benthamiana leaves. The sequence is that of RxLR effector protein PITG_15972 from Phytophthora infestans (strain T30-4) (Potato late blight agent).